The primary structure comprises 273 residues: Putative pyruvate, phosphate dikinase regulatory protein (273 aa).

153-160 serves as a coordination point for ADP; that stretch reads GVSRTSKT.

It belongs to the pyruvate, phosphate/water dikinase regulatory protein family. PDRP subfamily.

It carries out the reaction N(tele)-phospho-L-histidyl/L-threonyl-[pyruvate, phosphate dikinase] + ADP = N(tele)-phospho-L-histidyl/O-phospho-L-threonyl-[pyruvate, phosphate dikinase] + AMP + H(+). The catalysed reaction is N(tele)-phospho-L-histidyl/O-phospho-L-threonyl-[pyruvate, phosphate dikinase] + phosphate + H(+) = N(tele)-phospho-L-histidyl/L-threonyl-[pyruvate, phosphate dikinase] + diphosphate. In terms of biological role, bifunctional serine/threonine kinase and phosphorylase involved in the regulation of the pyruvate, phosphate dikinase (PPDK) by catalyzing its phosphorylation/dephosphorylation. The sequence is that of Putative pyruvate, phosphate dikinase regulatory protein from Sinorhizobium fredii (strain NBRC 101917 / NGR234).